The sequence spans 265 residues: Undecaprenyl-diphosphatase (265 aa).

The next 7 membrane-spanning stretches (helical) occupy residues 41–61 (IAYT…LIYF), 75–95 (LKFL…LYVI), 104–124 (YNPS…GIYI), 137–157 (LSTK…LPGV), 180–200 (YSYL…LLFT), 215–235 (GIAL…GFLL), and 244–264 (YLID…GLII).

This sequence belongs to the UppP family.

The protein resides in the cell membrane. The enzyme catalyses di-trans,octa-cis-undecaprenyl diphosphate + H2O = di-trans,octa-cis-undecaprenyl phosphate + phosphate + H(+). Its function is as follows. Catalyzes the dephosphorylation of undecaprenyl diphosphate (UPP). The polypeptide is Undecaprenyl-diphosphatase (Saccharolobus islandicus (strain Y.N.15.51 / Yellowstone #2) (Sulfolobus islandicus)).